Consider the following 165-residue polypeptide: uncharacterized protein (165 aa).

The next 2 helical transmembrane spans lie at Leu7 to Val27 and Lys141 to Leu161.

It is found in the cell membrane. This is an uncharacterized protein from Archaeoglobus fulgidus (strain ATCC 49558 / DSM 4304 / JCM 9628 / NBRC 100126 / VC-16).